The primary structure comprises 100 residues: Urease subunit gamma (100 aa).

This sequence belongs to the urease gamma subunit family. Heterotrimer of UreA (gamma), UreB (beta) and UreC (alpha) subunits. Three heterotrimers associate to form the active enzyme.

It is found in the cytoplasm. It catalyses the reaction urea + 2 H2O + H(+) = hydrogencarbonate + 2 NH4(+). The protein operates within nitrogen metabolism; urea degradation; CO(2) and NH(3) from urea (urease route): step 1/1. This is Urease subunit gamma from Herpetosiphon aurantiacus (strain ATCC 23779 / DSM 785 / 114-95).